A 240-amino-acid polypeptide reads, in one-letter code: Transcriptional activator protein VanR (240 aa).

In terms of domain architecture, HTH luxR-type spans 169–234 (DAKPRAVLTA…QAITKAILGG (66 aa)). Positions 193 to 212 (AWEIATIINTSERTVKFHFS) form a DNA-binding region, H-T-H motif.

It belongs to the autoinducer-regulated transcriptional regulatory protein family.

Its function is as follows. Probable transcriptional activator. Binds to autoinducer molecule ODHL. The protein is Transcriptional activator protein VanR (vanR) of Vibrio anguillarum (Listonella anguillarum).